The chain runs to 458 residues: Serine protease Do-like HtrB (458 aa).

Residues 1-18 (MDYRRDGQNDQHQTEPSH) show a composition bias toward basic and acidic residues. Positions 1–42 (MDYRRDGQNDQHQTEPSHTEQQNTENQKLIGHSEQELLDAPV) are disordered. Residues 1–71 (MDYRRDGQND…TAVKKEKKRR (71 aa)) lie on the Cytoplasmic side of the membrane. The chain crosses the membrane as a helical span at residues 72-92 (AAWLSPILGGIIGGGLMLGIA). The Extracellular portion of the chain corresponds to 93 to 458 (PYLPSDQNQA…LTKQTESSSS (366 aa)). A disordered region spans residues 146–170 (QTSQNNTFGTGGGSSSESESGTGSG). Residues His187, Asp217, and Ser298 each act as charge relay system in the active site. Substrate contacts are provided by residues 296–298 (GNS) and 352–356 (LGVQM). The 85-residue stretch at 356–440 (MIDMSQVPET…KTTIQVLRKG (85 aa)) folds into the PDZ domain.

Belongs to the peptidase S1C family.

It localises to the cell membrane. The enzyme catalyses Acts on substrates that are at least partially unfolded. The cleavage site P1 residue is normally between a pair of hydrophobic residues, such as Val-|-Val.. Degrades abnormal exported proteins and responsible for the propeptide processing of a natural pro-protein and for the maturation of a native protein. It also plays a prominent role in stress (heat shock, ethanol, puromycin and NaCl) resistance during active exponential growth. This is Serine protease Do-like HtrB (htrB) from Bacillus subtilis (strain 168).